The primary structure comprises 369 residues: Glutamate 5-kinase (369 aa).

Lys14 contributes to the ATP binding site. Substrate-binding residues include Ser54, Asp141, and Asn153. ATP-binding positions include 173–174 (SD) and 215–221 (TGGMVTK). The PUA domain occupies 277–355 (RGRLHLDPGA…SELATALGPA (79 aa)).

This sequence belongs to the glutamate 5-kinase family.

The protein localises to the cytoplasm. The enzyme catalyses L-glutamate + ATP = L-glutamyl 5-phosphate + ADP. The protein operates within amino-acid biosynthesis; L-proline biosynthesis; L-glutamate 5-semialdehyde from L-glutamate: step 1/2. In terms of biological role, catalyzes the transfer of a phosphate group to glutamate to form L-glutamate 5-phosphate. This is Glutamate 5-kinase from Salinispora arenicola (strain CNS-205).